Reading from the N-terminus, the 1164-residue chain is DNA-directed RNA polymerase 132 kDa polypeptide (1164 aa).

Belongs to the RNA polymerase beta chain family. The DNA-dependent RNA polymerase used for intermediate and late genes expression consists of eight subunits (147) kDa, (133) kDa, (35) kDa, (30) kDa, (22) kDa, (19) kDa, (18) kDa and (7) kDa totalling more than 500 kDa in mass. The same holoenzyme, with the addition of the transcription-specificity factor RAP94, is used for early gene expression.

The protein resides in the virion. The enzyme catalyses RNA(n) + a ribonucleoside 5'-triphosphate = RNA(n+1) + diphosphate. Functionally, part of the DNA-dependent RNA polymerase which catalyzes the transcription of viral DNA into RNA using the four ribonucleoside triphosphates as substrates. Responsible for the transcription of early, intermediate and late genes. DNA-dependent RNA polymerase associates with the early transcription factor (ETF), itself composed of D6 and A7, thereby allowing the early genes transcription. Late transcription, and probably also intermediate transcription, require newly synthesized RNA polymerase. The chain is DNA-directed RNA polymerase 132 kDa polypeptide (RPO132) from Camelus.